A 266-amino-acid polypeptide reads, in one-letter code: Outer membrane protein OmpK (266 aa).

Residues methionine 1 to alanine 20 form the signal peptide.

The protein belongs to the nucleoside-specific channel-forming outer membrane porin (Tsx) (TC 1.B.10) family.

The protein resides in the cell outer membrane. In terms of biological role, serves as receptor for a broad-host-range vibriophage, KVP40. The sequence is that of Outer membrane protein OmpK (ompK) from Vibrio parahaemolyticus serotype O3:K6 (strain RIMD 2210633).